Consider the following 359-residue polypeptide: MGICDPIHQLGMWDDFNSSFPSTSATMILEVDKCLEDQIPIMEKRLDNETEDTSHGTVGTSNRYEPETSKPVEKVLRRLAQNREAARKSRLRKKAYVQQLENSKLKLIQLEQELERARKQGMCVGGGVDASQLSYSGTASSGTAVFDMEYGHWVEEQTRQTNDLRIALHSQIGEAELRIIVDGYLNHYFDLFRMKATAAKADVLYIMSGMWKTSAERFFMWIGGFRPSELLKVLTPHLELLTEQQLREVCNLTQSCQQAEDALSQGMVKLHQILAEAVAAGRLGEGNYTLPQMGPAIEKLEDLVRFVNQADHLRQETLQQMSRILNTCQAAQGLLALGEYFERLRVLSSQWATRLREPT.

The segment covering 44–54 (KRLDNETEDTS) has biased composition (basic and acidic residues). A disordered region spans residues 44-72 (KRLDNETEDTSHGTVGTSNRYEPETSKPV). The bZIP domain occupies 72–135 (VEKVLRRLAQ…GGVDASQLSY (64 aa)). Residues 73-125 (EKVLRRLAQNREAARKSRLRKKAYVQQLENSKLKLIQLEQELERARKQGMCVG) adopt a coiled-coil conformation. Residues 74-94 (KVLRRLAQNREAARKSRLRKK) are basic motif. Residues 100–114 (LENSKLKLIQLEQEL) are leucine-zipper. Residues 143–354 (TAVFDMEYGH…RVLSSQWATR (212 aa)) enclose the DOG1 domain.

It belongs to the bZIP family. As to quaternary structure, binds DNA as a dimer.

It localises to the nucleus. Its function is as follows. Transcriptional activator that binds specifically to the DNA sequence 5'-TGACG-3'. Recognizes ocs elements like the as-1 motif of the cauliflower mosaic virus 35S promoter. Binding to the as-1-like cis elements mediate auxin- and salicylic acid-inducible transcription. Could also bind to the Hex-motif (5'-TGACGTGG-3') another cis-acting element found in plant histone promoters. The protein is TGACG-sequence-specific DNA-binding protein TGA-1A (TGA1A) of Nicotiana tabacum (Common tobacco).